The following is a 227-amino-acid chain: Cytochrome c oxidase subunit 2 (227 aa).

Over Met1–Ser14 the chain is Mitochondrial intermembrane. Residues Pro15–Met45 form a helical membrane-spanning segment. Over Leu46 to Gln59 the chain is Mitochondrial matrix. A helical membrane pass occupies residues Glu60–Met87. Over Asp88–Leu227 the chain is Mitochondrial intermembrane. Residues His161, Cys196, Glu198, Cys200, His204, and Met207 each contribute to the Cu cation site. Glu198 is a Mg(2+) binding site.

It belongs to the cytochrome c oxidase subunit 2 family. In terms of assembly, component of the cytochrome c oxidase (complex IV, CIV), a multisubunit enzyme composed of 14 subunits. The complex is composed of a catalytic core of 3 subunits MT-CO1, MT-CO2 and MT-CO3, encoded in the mitochondrial DNA, and 11 supernumerary subunits COX4I, COX5A, COX5B, COX6A, COX6B, COX6C, COX7A, COX7B, COX7C, COX8 and NDUFA4, which are encoded in the nuclear genome. The complex exists as a monomer or a dimer and forms supercomplexes (SCs) in the inner mitochondrial membrane with NADH-ubiquinone oxidoreductase (complex I, CI) and ubiquinol-cytochrome c oxidoreductase (cytochrome b-c1 complex, complex III, CIII), resulting in different assemblies (supercomplex SCI(1)III(2)IV(1) and megacomplex MCI(2)III(2)IV(2)). Found in a complex with TMEM177, COA6, COX18, COX20, SCO1 and SCO2. Interacts with TMEM177 in a COX20-dependent manner. Interacts with COX20. Interacts with COX16. Cu cation serves as cofactor.

It is found in the mitochondrion inner membrane. It catalyses the reaction 4 Fe(II)-[cytochrome c] + O2 + 8 H(+)(in) = 4 Fe(III)-[cytochrome c] + 2 H2O + 4 H(+)(out). In terms of biological role, component of the cytochrome c oxidase, the last enzyme in the mitochondrial electron transport chain which drives oxidative phosphorylation. The respiratory chain contains 3 multisubunit complexes succinate dehydrogenase (complex II, CII), ubiquinol-cytochrome c oxidoreductase (cytochrome b-c1 complex, complex III, CIII) and cytochrome c oxidase (complex IV, CIV), that cooperate to transfer electrons derived from NADH and succinate to molecular oxygen, creating an electrochemical gradient over the inner membrane that drives transmembrane transport and the ATP synthase. Cytochrome c oxidase is the component of the respiratory chain that catalyzes the reduction of oxygen to water. Electrons originating from reduced cytochrome c in the intermembrane space (IMS) are transferred via the dinuclear copper A center (CU(A)) of subunit 2 and heme A of subunit 1 to the active site in subunit 1, a binuclear center (BNC) formed by heme A3 and copper B (CU(B)). The BNC reduces molecular oxygen to 2 water molecules using 4 electrons from cytochrome c in the IMS and 4 protons from the mitochondrial matrix. The protein is Cytochrome c oxidase subunit 2 (MT-CO2) of Dugong dugon (Dugong).